The primary structure comprises 603 residues: Iron-sulfur clusters transporter ATM1, mitochondrial (603 aa).

Residues 20 to 41 (VLLAVGLLVGGKVLNVQVPFFF) form a helical membrane-spanning segment. One can recognise an ABC transmembrane type-1 domain in the interval 20 to 310 (VLLAVGLLVG…LGSVYRELRQ (291 aa)). The Mitochondrial intermembrane segment spans residues 42 to 64 (REIVDSLNVDIAATGGTVATVAG). Residues 65–88 (TMIFAYGASRIGAVVSQELRNAVF) form a helical membrane-spanning segment. At 89-137 (SSVAQKAIRRVATRTFGHLLNLDLNFHLSKQTGGLTRAIDRGTKGISFL) the chain is on the mitochondrial matrix side. Residues 138 to 161 (LTSMVFHIVPTALEISMVCGILTY) form a helical membrane-spanning segment. Gln-162 is a topological domain (mitochondrial intermembrane). Residues 163–183 (FGWEFAAVTALTMSAYTAFTI) traverse the membrane as a helical segment. Residues 184–249 (WTTAWRTKFR…SSIKVATSLA (66 aa)) lie on the Mitochondrial matrix side of the membrane. Glutathione contacts are provided by residues 189–193 (RTKFR) and 252–255 (NSGQ). A helical transmembrane segment spans residues 250–268 (FLNSGQNIIFSSALTIMMW). The Mitochondrial intermembrane portion of the chain corresponds to 269–283 (LGAKGIVAGSLSVGD). A helical transmembrane segment spans residues 284–305 (LVLINQLVFQLSVPLNFLGSVY). Gly-302 is a binding site for glutathione. Over 306–603 (RELRQSLLDM…SEREAPVPVK (298 aa)) the chain is Mitochondrial matrix. The ABC transporter domain occupies 345–581 (IRFDNVSFGY…NGLYTELWMA (237 aa)). ATP-binding positions include Tyr-354 and 378 to 389 (GPSGCGKSTLLR).

The protein belongs to the ABC transporter superfamily. ABCB family. Heavy Metal importer (TC 3.A.1.210) subfamily. As to quaternary structure, homodimer.

The protein localises to the mitochondrion inner membrane. In terms of biological role, performs an essential function in the generation of cytoplasmic iron-sulfur proteins by mediating the ATP-dependent export of Fe/S cluster precursors synthesized by NFS1 and other mitochondrial proteins. Hydrolyzes ATP. Binds glutathione and may function by transporting a glutathione-conjugated iron-sulfur compound. This chain is Iron-sulfur clusters transporter ATM1, mitochondrial, found in Chaetomium globosum (strain ATCC 6205 / CBS 148.51 / DSM 1962 / NBRC 6347 / NRRL 1970) (Soil fungus).